Here is a 616-residue protein sequence, read N- to C-terminus: Dihydroxy-acid dehydratase (616 aa).

Residue Asp-81 participates in Mg(2+) binding. Cys-122 is a [2Fe-2S] cluster binding site. Mg(2+) is bound by residues Asp-123 and Lys-124. At Lys-124 the chain carries N6-carboxylysine. Residue Cys-195 coordinates [2Fe-2S] cluster. Glu-491 contributes to the Mg(2+) binding site. Ser-517 serves as the catalytic Proton acceptor.

Belongs to the IlvD/Edd family. In terms of assembly, homodimer. The cofactor is [2Fe-2S] cluster. Mg(2+) is required as a cofactor.

It carries out the reaction (2R)-2,3-dihydroxy-3-methylbutanoate = 3-methyl-2-oxobutanoate + H2O. The catalysed reaction is (2R,3R)-2,3-dihydroxy-3-methylpentanoate = (S)-3-methyl-2-oxopentanoate + H2O. Its pathway is amino-acid biosynthesis; L-isoleucine biosynthesis; L-isoleucine from 2-oxobutanoate: step 3/4. It participates in amino-acid biosynthesis; L-valine biosynthesis; L-valine from pyruvate: step 3/4. Its function is as follows. Functions in the biosynthesis of branched-chain amino acids. Catalyzes the dehydration of (2R,3R)-2,3-dihydroxy-3-methylpentanoate (2,3-dihydroxy-3-methylvalerate) into 2-oxo-3-methylpentanoate (2-oxo-3-methylvalerate) and of (2R)-2,3-dihydroxy-3-methylbutanoate (2,3-dihydroxyisovalerate) into 2-oxo-3-methylbutanoate (2-oxoisovalerate), the penultimate precursor to L-isoleucine and L-valine, respectively. This Salmonella newport (strain SL254) protein is Dihydroxy-acid dehydratase.